We begin with the raw amino-acid sequence, 403 residues long: Tyrosine--tRNA ligase (403 aa).

The 'HIGH' region signature appears at 42 to 51 (PTAPDLHLGH). Residues 226–230 (KMSKS) carry the 'KMSKS' region motif. Lysine 229 is an ATP binding site. The S4 RNA-binding domain occupies 336–396 (MPISAVLNKA…GKKAFGRVTL (61 aa)).

This sequence belongs to the class-I aminoacyl-tRNA synthetase family. TyrS type 2 subfamily. Homodimer.

It is found in the cytoplasm. The enzyme catalyses tRNA(Tyr) + L-tyrosine + ATP = L-tyrosyl-tRNA(Tyr) + AMP + diphosphate + H(+). Its function is as follows. Catalyzes the attachment of tyrosine to tRNA(Tyr) in a two-step reaction: tyrosine is first activated by ATP to form Tyr-AMP and then transferred to the acceptor end of tRNA(Tyr). The polypeptide is Tyrosine--tRNA ligase (Pseudomonas savastanoi pv. phaseolicola (strain 1448A / Race 6) (Pseudomonas syringae pv. phaseolicola (strain 1448A / Race 6))).